Reading from the N-terminus, the 630-residue chain is YTH domain-containing family protein 1 (630 aa).

Disordered stretches follow at residues 38 to 113 (DMTQ…YMQQ), 160 to 183 (YYPQ…AGPY), and 200 to 241 (QVGD…QSGH). Positions 70–102 (PGQQQQHQYGSPPNTNGNAQPMPQAHGNNTMNS) are enriched in polar residues. The 209-residue stretch at 382–590 (EKYFILKSLT…SVGRKLTGLF (209 aa)) folds into the YTH domain.

Belongs to the YTHDF family. YTHDF1 subfamily.

The protein localises to the cytoplasm. It is found in the P-body. In terms of biological role, specifically recognizes and binds N6-methyladenosine (m6A)-containing mRNAs, and regulates their stability. M6A is a modification present at internal sites of mRNAs and some non-coding RNAs and plays a role in mRNA stability and processing. Plays a role in pathogenicity towards plant host. The polypeptide is YTH domain-containing family protein 1 (Pyricularia oryzae (strain 70-15 / ATCC MYA-4617 / FGSC 8958) (Rice blast fungus)).